The following is a 77-amino-acid chain: Sec-independent protein translocase protein TatA (77 aa).

The chain crosses the membrane as a helical span at residues 1 to 21; the sequence is MGSFSIWHWLIVLVIVMLVFG. The segment at 50 to 77 is disordered; sequence ADASTQQKISGGQTLEGEAREKVEKTHS. Residues 53 to 62 show a composition bias toward polar residues; that stretch reads STQQKISGGQ. The span at 66-77 shows a compositional bias: basic and acidic residues; that stretch reads GEAREKVEKTHS.

It belongs to the TatA/E family. In terms of assembly, the Tat system comprises two distinct complexes: a TatABC complex, containing multiple copies of TatA, TatB and TatC subunits, and a separate TatA complex, containing only TatA subunits. Substrates initially bind to the TatABC complex, which probably triggers association of the separate TatA complex to form the active translocon.

It is found in the cell inner membrane. Part of the twin-arginine translocation (Tat) system that transports large folded proteins containing a characteristic twin-arginine motif in their signal peptide across membranes. TatA could form the protein-conducting channel of the Tat system. This chain is Sec-independent protein translocase protein TatA, found in Azoarcus sp. (strain BH72).